We begin with the raw amino-acid sequence, 303 residues long: Energy-coupling factor transporter ATP-binding protein EcfA2 (303 aa).

Residues 17–260 (LSVSNLSCFF…EAFLAHTTII (244 aa)) form the ABC transporter domain. 54–61 (GDSGSGKS) is a binding site for ATP.

This sequence belongs to the ABC transporter superfamily. Energy-coupling factor EcfA family. As to quaternary structure, forms a stable energy-coupling factor (ECF) transporter complex composed of 2 membrane-embedded substrate-binding proteins (S component), 2 ATP-binding proteins (A component) and 2 transmembrane proteins (T component).

It is found in the cell membrane. Its function is as follows. ATP-binding (A) component of a common energy-coupling factor (ECF) ABC-transporter complex. Unlike classic ABC transporters this ECF transporter provides the energy necessary to transport a number of different substrates. This chain is Energy-coupling factor transporter ATP-binding protein EcfA2, found in Mycoplasma pneumoniae (strain ATCC 29342 / M129 / Subtype 1) (Mycoplasmoides pneumoniae).